Reading from the N-terminus, the 286-residue chain is Phosphonates import ATP-binding protein PhnC (286 aa).

The region spanning 3–246 (FHLKQVTRRF…AVTEIYGTDS (244 aa)) is the ABC transporter domain. 35-42 (GRSGAGKS) is an ATP binding site.

This sequence belongs to the ABC transporter superfamily. Phosphonates importer (TC 3.A.1.9.1) family. As to quaternary structure, the complex is composed of two ATP-binding proteins (PhnC), two transmembrane proteins (PhnE) and a solute-binding protein (PhnD).

Its subcellular location is the cell inner membrane. It catalyses the reaction phosphonate(out) + ATP + H2O = phosphonate(in) + ADP + phosphate + H(+). In terms of biological role, part of the ABC transporter complex PhnCDE involved in phosphonates import. Responsible for energy coupling to the transport system. The protein is Phosphonates import ATP-binding protein PhnC of Agrobacterium fabrum (strain C58 / ATCC 33970) (Agrobacterium tumefaciens (strain C58)).